Consider the following 247-residue polypeptide: UPF0246 protein LSL_1719 (247 aa).

It belongs to the UPF0246 family.

In Ligilactobacillus salivarius (strain UCC118) (Lactobacillus salivarius), this protein is UPF0246 protein LSL_1719.